Reading from the N-terminus, the 328-residue chain is uncharacterized protein (328 aa).

A disordered region spans residues 296-328 (APEGDLEDEIIEVDPEQPRDDPYRRLRTPPPGG). Residues 299–310 (GDLEDEIIEVDP) show a composition bias toward acidic residues.

In terms of biological role, possibly necessary for replication. This is an uncharacterized protein from Halobacterium sp. (strain GN101).